The following is a 276-amino-acid chain: Sulfur carrier protein FdhD (276 aa).

C118 functions as the Cysteine persulfide intermediate in the catalytic mechanism.

The protein belongs to the FdhD family.

It is found in the cytoplasm. Functionally, required for formate dehydrogenase (FDH) activity. Acts as a sulfur carrier protein that transfers sulfur from IscS to the molybdenum cofactor prior to its insertion into FDH. In Mycobacterium bovis (strain ATCC BAA-935 / AF2122/97), this protein is Sulfur carrier protein FdhD.